The sequence spans 317 residues: MSQEFLDFELPIAELEAKIEALRSVSQQDQQINLDDEITRLQKKSAELTQKTFANLDAWQVSQMARHPNRPYTLDYIEHIFTDFQTLAGDRAFADDQAIVGGLARLEERPVMIIGHQKGRSIKEKVKRNFGMPAPEGYRKALRLMQMAERFKLPIITFIDTPGAYPGVGAEERGQSEAIARNLREMSMLKVPIICTVIGEGGSGGALAIGVGDKINMLQYSTYSVISPEGCASILWKSAEKASTAAEVMGLTASRLHELKLIDSIIEEPLGGAHRNYDTMSNNLKKRLLADLADLDKLDQETLLDRRYKRLMSYGYC.

Residues 33–294 (NLDDEITRLQ…KKRLLADLAD (262 aa)) enclose the CoA carboxyltransferase C-terminal domain.

The protein belongs to the AccA family. Acetyl-CoA carboxylase is a heterohexamer composed of biotin carboxyl carrier protein (AccB), biotin carboxylase (AccC) and two subunits each of ACCase subunit alpha (AccA) and ACCase subunit beta (AccD).

The protein localises to the cytoplasm. The catalysed reaction is N(6)-carboxybiotinyl-L-lysyl-[protein] + acetyl-CoA = N(6)-biotinyl-L-lysyl-[protein] + malonyl-CoA. It functions in the pathway lipid metabolism; malonyl-CoA biosynthesis; malonyl-CoA from acetyl-CoA: step 1/1. Functionally, component of the acetyl coenzyme A carboxylase (ACC) complex. First, biotin carboxylase catalyzes the carboxylation of biotin on its carrier protein (BCCP) and then the CO(2) group is transferred by the carboxyltransferase to acetyl-CoA to form malonyl-CoA. The chain is Acetyl-coenzyme A carboxylase carboxyl transferase subunit alpha from Histophilus somni (strain 129Pt) (Haemophilus somnus).